The sequence spans 319 residues: 7-methylguanosine phosphate-specific 5'-nucleotidase (319 aa).

Aspartate 55 functions as the Nucleophile in the catalytic mechanism. Positions 55 and 57 each coordinate Mg(2+). The Proton donor role is filled by aspartate 57. Glutamate 103 provides a ligand contact to CMP. 2 residues coordinate N(7)-methyl-GMP: glutamate 103 and serine 124. A substrate-binding site is contributed by 171–172 (SA). Residue aspartate 245 coordinates Mg(2+).

It belongs to the pyrimidine 5'-nucleotidase family. In terms of assembly, monomer. Requires Mg(2+) as cofactor.

It catalyses the reaction N(7)-methyl-GMP + H2O = N(7)-methylguanosine + phosphate. It carries out the reaction CMP + H2O = cytidine + phosphate. The enzyme catalyses a ribonucleoside 5'-phosphate + H2O = a ribonucleoside + phosphate. Its activity is regulated as follows. Inhibited by high levels of AMP. In terms of biological role, specifically hydrolyzes 7-methylguanosine monophosphate (m(7)GMP) to 7-methylguanosine and inorganic phosphate. Also able to mediate hydrolysis of diphosphate (m(7)GDP) to 7-methylguanosine and 2 inorganic phosphate with lower activity. The specific activity for m(7)GMP may protect cells against undesired salvage of m(7)GMP and its incorporation into nucleic acids. Also has weak activity for CMP. UMP and purine nucleotides are poor substrates. In Drosophila melanogaster (Fruit fly), this protein is 7-methylguanosine phosphate-specific 5'-nucleotidase.